We begin with the raw amino-acid sequence, 428 residues long: C4-dicarboxylate transport protein (428 aa).

Helical transmembrane passes span 4–24, 44–64, 76–96, 142–162, 184–204, 222–242, 289–309, 326–346, and 352–372; these read SLFK…ILLG, LIKM…IAGM, VALL…LIIV, IGAF…LFGF, VIFG…FGAM, LIIC…GTIA, VVGL…SIYL, IFHQ…AAGV, and IVLA…LALI.

The protein belongs to the dicarboxylate/amino acid:cation symporter (DAACS) (TC 2.A.23) family.

It localises to the cell inner membrane. Functionally, responsible for the transport of dicarboxylates such as succinate, fumarate, and malate from the periplasm across the membrane. The protein is C4-dicarboxylate transport protein of Salmonella arizonae (strain ATCC BAA-731 / CDC346-86 / RSK2980).